Here is an 83-residue protein sequence, read N- to C-terminus: uncharacterized protein (83 aa).

The next 3 membrane-spanning stretches (helical) occupy residues 5 to 22, 32 to 49, and 56 to 78; these read VLLS…VYSI, IIKI…FSPA, and IGTI…IFIA.

The protein localises to the cell membrane. This is an uncharacterized protein from Rickettsia prowazekii (strain Madrid E).